Here is a 344-residue protein sequence, read N- to C-terminus: Fructose-1,6-bisphosphatase class 1 (344 aa).

4 residues coordinate Mg(2+): Glu-91, Asp-110, Leu-112, and Asp-113. Residues 113–116 and Asn-200 contribute to the substrate site; that span reads DGSS. Glu-272 is a binding site for Mg(2+).

The protein belongs to the FBPase class 1 family. Homotetramer. It depends on Mg(2+) as a cofactor.

It is found in the cytoplasm. The catalysed reaction is beta-D-fructose 1,6-bisphosphate + H2O = beta-D-fructose 6-phosphate + phosphate. The protein operates within carbohydrate biosynthesis; Calvin cycle. The polypeptide is Fructose-1,6-bisphosphatase class 1 (Rhodopseudomonas palustris (strain BisB18)).